A 61-amino-acid polypeptide reads, in one-letter code: Defensin BmKDfsin1 (61 aa).

The N-terminal stretch at 1 to 25 (MKTIVLLFVLVLVFALLVKMGMVEA) is a signal peptide. Cystine bridges form between C29-C50, C36-C58, and C40-C60.

The protein belongs to the invertebrate defensin family. Type 2 subfamily. Highly expressed in non-venom gland (hemolymph) and moderately expressed in venom gland.

The protein resides in the secreted. Antibacterial peptide active against Gram-positive bacteria, but not on Gram-negative bacteria. Also has weak blocking activity on Kv1.1/KCNA1, Kv1.2/KCNA2, Kv1.3/KCNA3, KCa3.1/KCNN4/IK, KCa2.3/KCNN3/SK3 and Kv11.1/KCNH2/ERG1 channels (tested at 1 uM). It inhibits potassium channel current by interacting with the pore region. The polypeptide is Defensin BmKDfsin1 (Olivierus martensii (Manchurian scorpion)).